Reading from the N-terminus, the 303-residue chain is Ornithine carbamoyltransferase (303 aa).

Carbamoyl phosphate is bound by residues Ser-52–Thr-55, Gln-79, Arg-103, and His-130–Gln-133. L-ornithine contacts are provided by residues Asn-161, Asp-222, and Ser-226–Met-227. Carbamoyl phosphate is bound by residues Cys-262–Leu-263 and Lys-290.

Belongs to the aspartate/ornithine carbamoyltransferase superfamily. OTCase family.

The protein resides in the cytoplasm. The enzyme catalyses carbamoyl phosphate + L-ornithine = L-citrulline + phosphate + H(+). It functions in the pathway amino-acid biosynthesis; L-arginine biosynthesis; L-arginine from L-ornithine and carbamoyl phosphate: step 1/3. In terms of biological role, reversibly catalyzes the transfer of the carbamoyl group from carbamoyl phosphate (CP) to the N(epsilon) atom of ornithine (ORN) to produce L-citrulline. In Desulfotalea psychrophila (strain LSv54 / DSM 12343), this protein is Ornithine carbamoyltransferase.